The following is a 465-amino-acid chain: D(1C) dopamine receptor (465 aa).

At 1–30 (MENFSIFNVTVNVWHADLDVGNSDLSLRAL) the chain is on the extracellular side. Asparagine 3 and asparagine 8 each carry an N-linked (GlcNAc...) asparagine glycan. A helical membrane pass occupies residues 31-54 (TGLLLSLLILSTLLGNTLVCLAVI). At 55–65 (KFRHLRSKVTN) the chain is on the cytoplasmic side. Residues 66 to 92 (FFVISLAVSDLFVALLVMPWKAVTEVA) traverse the membrane as a helical segment. Residues 93 to 101 (GFWVFGDFC) lie on the Extracellular side of the membrane. Cysteine 101 and cysteine 187 are disulfide-bonded. The chain crosses the membrane as a helical span at residues 102–124 (DTWVAFDIMCSTASILNLCIISL). The Cytoplasmic segment spans residues 125-143 (DRYWAIASPFRYERKMTQR). Residues 144–168 (VAFIMIGVAWTLSILISFIPVQLSW) traverse the membrane as a helical segment. The Extracellular segment spans residues 169 to 193 (HKSHEADEELNGVNHTENCDSSLNR). A helical transmembrane segment spans residues 194–219 (TYAISSSLISFYIPVVIMIGTYTRIY). Over 220–264 (RIAQTQIRRISSLERAVEHAQRCSSRLSNENSLKTSFRKETKVLK) the chain is Cytoplasmic. Residues 265–291 (TLSIIMGVFVFCWLPFFVLNCMIPFCH) form a helical membrane-spanning segment. The Extracellular portion of the chain corresponds to 292–309 (MNLPGQNEPEPPCVSETT). Residues 310–334 (FNIFVWFGWANSSLNPVIYAFNADF) traverse the membrane as a helical segment. Residues 335–465 (RKAFTTILGC…EDRHYTTKLY (131 aa)) are Cytoplasmic-facing. Cysteine 344 is lipidated: S-palmitoyl cysteine.

This sequence belongs to the G-protein coupled receptor 1 family. Brain and kidney.

Its subcellular location is the cell membrane. The protein localises to the cell projection. It is found in the cilium membrane. Functionally, this is one of the five types (D1 to D5) of receptors for dopamine. The activity of this receptor is mediated by G proteins which activate adenylyl cyclase. This chain is D(1C) dopamine receptor (drd1c), found in Xenopus laevis (African clawed frog).